A 229-amino-acid chain; its full sequence is Demethylmenaquinone methyltransferase (229 aa).

S-adenosyl-L-methionine contacts are provided by residues Thr57, Asp77, and 101 to 102 (DV).

The protein belongs to the class I-like SAM-binding methyltransferase superfamily. MenG/UbiE family.

The catalysed reaction is a 2-demethylmenaquinol + S-adenosyl-L-methionine = a menaquinol + S-adenosyl-L-homocysteine + H(+). It functions in the pathway quinol/quinone metabolism; menaquinone biosynthesis; menaquinol from 1,4-dihydroxy-2-naphthoate: step 2/2. Methyltransferase required for the conversion of demethylmenaquinol (DMKH2) to menaquinol (MKH2). In Chlamydia trachomatis serovar L2 (strain ATCC VR-902B / DSM 19102 / 434/Bu), this protein is Demethylmenaquinone methyltransferase.